The chain runs to 250 residues: Small ribosomal subunit protein uS3 (250 aa).

Residues 39 to 111 enclose the KH type-2 domain; the sequence is IRTLIKNHYP…KVQINIFEVK (73 aa).

Belongs to the universal ribosomal protein uS3 family. Part of the 30S ribosomal subunit. Forms a tight complex with proteins S10 and S14.

Binds the lower part of the 30S subunit head. Binds mRNA in the 70S ribosome, positioning it for translation. The polypeptide is Small ribosomal subunit protein uS3 (Rubus stunt phytoplasma).